The sequence spans 179 residues: Large ribosomal subunit protein bL9 (179 aa).

Belongs to the bacterial ribosomal protein bL9 family.

Its function is as follows. Binds to the 23S rRNA. The polypeptide is Large ribosomal subunit protein bL9 (Bartonella bacilliformis (strain ATCC 35685 / KC583 / Herrer 020/F12,63)).